A 94-amino-acid chain; its full sequence is Acylphosphatase (94 aa).

Residues 7–94 enclose the Acylphosphatase-like domain; it reads AALVRITGRV…EAPAGFRITR (88 aa). Catalysis depends on residues arginine 22 and asparagine 40.

Belongs to the acylphosphatase family.

It carries out the reaction an acyl phosphate + H2O = a carboxylate + phosphate + H(+). The chain is Acylphosphatase (acyP) from Sinorhizobium medicae (strain WSM419) (Ensifer medicae).